The following is a 456-amino-acid chain: Bifunctional protein GlmU (456 aa).

The interval 1 to 229 (MLNNAMSVVI…LSEVEGVNNR (229 aa)) is pyrophosphorylase. Residues 11-14 (LAAG), lysine 25, glutamine 76, 81-82 (GT), 103-105 (YGD), glycine 140, glutamate 154, asparagine 169, and asparagine 227 each bind UDP-N-acetyl-alpha-D-glucosamine. Aspartate 105 contributes to the Mg(2+) binding site. Mg(2+) is bound at residue asparagine 227. Residues 230-250 (LQLSRLERVYQFEQAEKLLLA) are linker. Positions 251–456 (GVMLRDPARF…EGWRRPVKKK (206 aa)) are N-acetyltransferase. Residues arginine 333 and lysine 351 each contribute to the UDP-N-acetyl-alpha-D-glucosamine site. Histidine 363 functions as the Proton acceptor in the catalytic mechanism. UDP-N-acetyl-alpha-D-glucosamine is bound by residues tyrosine 366 and asparagine 377. Residues alanine 380, 386-387 (NY), serine 405, alanine 423, and arginine 440 contribute to the acetyl-CoA site.

It in the N-terminal section; belongs to the N-acetylglucosamine-1-phosphate uridyltransferase family. This sequence in the C-terminal section; belongs to the transferase hexapeptide repeat family. In terms of assembly, homotrimer. It depends on Mg(2+) as a cofactor.

The protein localises to the cytoplasm. It carries out the reaction alpha-D-glucosamine 1-phosphate + acetyl-CoA = N-acetyl-alpha-D-glucosamine 1-phosphate + CoA + H(+). It catalyses the reaction N-acetyl-alpha-D-glucosamine 1-phosphate + UTP + H(+) = UDP-N-acetyl-alpha-D-glucosamine + diphosphate. Its pathway is nucleotide-sugar biosynthesis; UDP-N-acetyl-alpha-D-glucosamine biosynthesis; N-acetyl-alpha-D-glucosamine 1-phosphate from alpha-D-glucosamine 6-phosphate (route II): step 2/2. It participates in nucleotide-sugar biosynthesis; UDP-N-acetyl-alpha-D-glucosamine biosynthesis; UDP-N-acetyl-alpha-D-glucosamine from N-acetyl-alpha-D-glucosamine 1-phosphate: step 1/1. It functions in the pathway bacterial outer membrane biogenesis; LPS lipid A biosynthesis. Catalyzes the last two sequential reactions in the de novo biosynthetic pathway for UDP-N-acetylglucosamine (UDP-GlcNAc). The C-terminal domain catalyzes the transfer of acetyl group from acetyl coenzyme A to glucosamine-1-phosphate (GlcN-1-P) to produce N-acetylglucosamine-1-phosphate (GlcNAc-1-P), which is converted into UDP-GlcNAc by the transfer of uridine 5-monophosphate (from uridine 5-triphosphate), a reaction catalyzed by the N-terminal domain. The chain is Bifunctional protein GlmU from Escherichia coli O7:K1 (strain IAI39 / ExPEC).